Reading from the N-terminus, the 309-residue chain is Dihydroorotate dehydrogenase B (NAD(+)), catalytic subunit (309 aa).

FMN contacts are provided by residues serine 21 and 45 to 46 (KA). Residues lysine 45 and 69–73 (NAIGL) contribute to the substrate site. FMN is bound by residues asparagine 99 and asparagine 127. Residue asparagine 127 participates in substrate binding. Cysteine 130 serves as the catalytic Nucleophile. FMN-binding residues include lysine 165 and isoleucine 191. 192–193 (NT) is a substrate binding site. Residues glycine 217, 243–244 (GG), and 265–266 (GT) each bind FMN.

Belongs to the dihydroorotate dehydrogenase family. Type 1 subfamily. As to quaternary structure, heterotetramer of 2 PyrK and 2 PyrD type B subunits. The cofactor is FMN.

It is found in the cytoplasm. The catalysed reaction is (S)-dihydroorotate + NAD(+) = orotate + NADH + H(+). It functions in the pathway pyrimidine metabolism; UMP biosynthesis via de novo pathway; orotate from (S)-dihydroorotate (NAD(+) route): step 1/1. Catalyzes the conversion of dihydroorotate to orotate with NAD(+) as electron acceptor. The sequence is that of Dihydroorotate dehydrogenase B (NAD(+)), catalytic subunit (pyrD) from Bacillus cereus (strain ATCC 14579 / DSM 31 / CCUG 7414 / JCM 2152 / NBRC 15305 / NCIMB 9373 / NCTC 2599 / NRRL B-3711).